The primary structure comprises 150 residues: Macrodomain Ter protein (150 aa).

The protein belongs to the MatP family. As to quaternary structure, homodimer.

Its subcellular location is the cytoplasm. Required for spatial organization of the terminus region of the chromosome (Ter macrodomain) during the cell cycle. Prevents early segregation of duplicated Ter macrodomains during cell division. Binds specifically to matS, which is a 13 bp signature motif repeated within the Ter macrodomain. This Salmonella agona (strain SL483) protein is Macrodomain Ter protein.